Here is a 138-residue protein sequence, read N- to C-terminus: Large-conductance mechanosensitive channel (138 aa).

3 consecutive transmembrane segments (helical) span residues 19 to 39, 40 to 60, and 81 to 101; these read VGVIIGGAFGAIVTSLVGDII, MPIIGAITGGLDFSNYFIPLA, and GSFLTLTLNFFIVAFVLFMVI.

The protein belongs to the MscL family. In terms of assembly, homopentamer.

The protein localises to the cell inner membrane. Its function is as follows. Channel that opens in response to stretch forces in the membrane lipid bilayer. May participate in the regulation of osmotic pressure changes within the cell. The protein is Large-conductance mechanosensitive channel of Bradyrhizobium sp. (strain ORS 278).